We begin with the raw amino-acid sequence, 284 residues long: RNase adapter protein RapZ (284 aa).

ATP is bound at residue 8–15; sequence GRSGSGKS. 56–59 is a GTP binding site; sequence DVRN. The segment at 266–284 is RNA-binding; that stretch reads RSRGKNVQSRHRTLEKRKQ.

Belongs to the RapZ-like family. RapZ subfamily. In terms of assembly, homotrimer.

Its function is as follows. Modulates the synthesis of GlmS, by affecting the processing and stability of the regulatory small RNA GlmZ. When glucosamine-6-phosphate (GlcN6P) concentrations are high in the cell, RapZ binds GlmZ and targets it to cleavage by RNase E. Consequently, GlmZ is inactivated and unable to activate GlmS synthesis. Under low GlcN6P concentrations, RapZ is sequestered and inactivated by an other regulatory small RNA, GlmY, preventing GlmZ degradation and leading to synthesis of GlmS. This is RNase adapter protein RapZ from Serratia proteamaculans (strain 568).